The primary structure comprises 571 residues: Protein dead ringer homolog (571 aa).

2 disordered regions span residues 45 to 117 (QHQQ…EPDK) and 190 to 229 (KRMQ…SCNG). A compositionally biased stretch (basic and acidic residues) spans 49 to 77 (RMMEQHKNDDVISNDVRCDDFSDGGERQR). Over residues 195 to 206 (DHNIQQSTNHIP) the composition is skewed to polar residues. Low complexity predominate over residues 207–224 (TPSSASSHTSSGSVTSQT). In terms of domain architecture, ARID spans 249 to 341 (DIKRKEFLDD…YLYPFECERE (93 aa)). The span at 459–471 (AAHHAAQQAAQHQ) shows a compositional bias: low complexity. The tract at residues 459-528 (AAHHAAQQAA…GDRGRHNEMS (70 aa)) is disordered. Residues 473–558 (SLKKEIDSDY…GVLFAHSPNH (86 aa)) form the REKLES domain. Basic and acidic residues-rich tracts occupy residues 487-507 (PPEK…DNQR) and 518-527 (MGDRGRHNEM).

It localises to the nucleus. In terms of biological role, transcription factor. This Ciona intestinalis (Transparent sea squirt) protein is Protein dead ringer homolog (Ci-DRIL1/2).